The primary structure comprises 400 residues: Na(+)/H(+) antiporter NhaA (400 aa).

The next 11 helical transmembrane spans lie at 9–29 (FLVS…IAMV), 60–80 (LILW…GLEL), 96–116 (VLPA…FYLF), 127–147 (WAIP…ILGA), 155–175 (IFLV…MAIF), 180–200 (LSLI…ALNL), 210–230 (LILG…ATLA), 263–283 (YFVL…GIGL), 294–314 (VILG…FVAI), 327–347 (WISF…SLFI), and 366–386 (VLIA…IASV).

The protein belongs to the NhaA Na(+)/H(+) (TC 2.A.33) antiporter family.

Its subcellular location is the cell inner membrane. It carries out the reaction Na(+)(in) + 2 H(+)(out) = Na(+)(out) + 2 H(+)(in). In terms of biological role, na(+)/H(+) antiporter that extrudes sodium in exchange for external protons. The sequence is that of Na(+)/H(+) antiporter NhaA from Campylobacter curvus (strain 525.92).